Here is a 172-residue protein sequence, read N- to C-terminus: Transcriptional activator protein (172 aa).

The Nuclear localization signal signature appears at 56–71 (KAQHRIAKHKAIRRRR). Residues 76 to 93 (CGCSIFYHIKCADHGFTH) fold into a zinc finger. The interval 119-172 (DHAGGRSSIHTDKDIPHPSQVQSQPQESTGSPQSIPELPSLDDIDSSFWDDIFK) is disordered. Residues 137–152 (SQVQSQPQESTGSPQS) are compositionally biased toward polar residues. Positions 158–172 (SLDDIDSSFWDDIFK) are transactivation.

This sequence belongs to the geminiviridae transcriptional activator protein family. As to quaternary structure, monomer. Homodimer. Homooligomer. Self-interaction correlates with nuclear localization and efficient activation of transcription. Monomers suppress local silencing by interacting with and inactivating host adenosine kinase 2 (ADK2) in the cytoplasm. Interacts with and inhibits host SNF1 kinase. Binds to ssDNA. In terms of processing, phosphorylated.

It localises to the host nucleus. The protein localises to the host cytoplasm. Functionally, strong activator of the late viral genes promoters. Enhances the expression of the capsid protein and nuclear shuttle protein. Acts as a suppressor of RNA-mediated gene silencing, also known as post-transcriptional gene silencing (PTGS), a mechanism of plant viral defense that limits the accumulation of viral RNAs. Suppresses the host RNA silencing by inhibiting adenosine kinase 2 (ADK2), a kinase involved in a general methylation pathway. Also suppresses the host basal defense by interacting with and inhibiting SNF1 kinase, a key regulator of cell metabolism implicated in innate antiviral defense. Determines pathogenicity. This chain is Transcriptional activator protein, found in Bean golden yellow mosaic virus (isolate Puerto Rico-Japan) (BGYMV).